The following is a 486-amino-acid chain: RAC-beta serine/threonine-protein kinase A (486 aa).

The 106-residue stretch at 5 to 110 (MVIKEGWLQK…WIIAIQTVAN (106 aa)) folds into the PH domain. O-linked (GlcNAc) serine glycosylation is found at serine 133 and serine 136. A Protein kinase domain is found at 157-414 (FDYLKLLGKG…AQEVMSHRFF (258 aa)). ATP contacts are provided by residues 163–171 (LGKGTFGKV) and lysine 186. Residue aspartate 280 is the Proton acceptor of the active site. Threonine 311 carries an O-linked (GlcNAc) threonine glycan. Threonine 314 is subject to Phosphothreonine. Threonine 318 is a glycosylation site (O-linked (GlcNAc) threonine). Residues 415–486 (VSINWQDVTE…QFSYSASIRE (72 aa)) form the AGC-kinase C-terminal domain. Positions 455–486 (LTPPDRYDNLDALESDQRPHFPQFSYSASIRE) are disordered. Residues 459 to 473 (DRYDNLDALESDQRP) show a composition bias toward basic and acidic residues. Serine 479 bears the Phosphoserine mark. Residue serine 479 is glycosylated (O-linked (GlcNAc) serine; alternate).

The protein belongs to the protein kinase superfamily. AGC Ser/Thr protein kinase family. RAC subfamily. Phosphorylation on Thr-314 and Ser-479 is required for full activity. Phosphorylation of the activation loop at Thr-314 by PDPK1/PDK1 is a prerequisite for full activation. Phosphorylation by mTORC2 at Ser-479 in response to growth factors plays a key role in AKT1 activation by facilitating subsequent phosphorylation of the activation loop by PDPK1/PDK1.

It catalyses the reaction L-seryl-[protein] + ATP = O-phospho-L-seryl-[protein] + ADP + H(+). The catalysed reaction is L-threonyl-[protein] + ATP = O-phospho-L-threonyl-[protein] + ADP + H(+). Two specific sites, one in the kinase domain (Thr-314) and the other in the C-terminal regulatory region (Ser-479), need to be phosphorylated for its full activation. Functionally, akt2-a is one of several closely related serine/threonine-protein kinases known as the AKT kinase, and which regulate many processes including metabolism, proliferation, cell survival, growth and angiogenesis. This is mediated through serine and/or threonine phosphorylation of a range of downstream substrates. Over 100 substrate candidates have been reported so far, but for most of them, no isoform specificity has been reported. May be involved in the inhibition of ciliogenesis. In Xenopus laevis (African clawed frog), this protein is RAC-beta serine/threonine-protein kinase A (akt2-a).